We begin with the raw amino-acid sequence, 602 residues long: Elongation factor 4 (602 aa).

Positions 7–189 (NNIRNFSIIA…RILTAVPPPQ (183 aa)) constitute a tr-type G domain. Residues 19-24 (DHGKST) and 136-139 (NKID) each bind GTP.

Belongs to the TRAFAC class translation factor GTPase superfamily. Classic translation factor GTPase family. LepA subfamily.

The protein resides in the cell inner membrane. The catalysed reaction is GTP + H2O = GDP + phosphate + H(+). Required for accurate and efficient protein synthesis under certain stress conditions. May act as a fidelity factor of the translation reaction, by catalyzing a one-codon backward translocation of tRNAs on improperly translocated ribosomes. Back-translocation proceeds from a post-translocation (POST) complex to a pre-translocation (PRE) complex, thus giving elongation factor G a second chance to translocate the tRNAs correctly. Binds to ribosomes in a GTP-dependent manner. The polypeptide is Elongation factor 4 (Protochlamydia amoebophila (strain UWE25)).